A 250-amino-acid polypeptide reads, in one-letter code: F-box only protein 17 (250 aa).

One can recognise an F-box domain in the interval 15-62 (HMALAELPPELLLQVLSHVPPRALVTRCRPVCRAWRDLVDGPSVWLLQ). The region spanning 99–250 (FCLLAPLGRN…GLLQGLSRLH (152 aa)) is the FBA domain.

In terms of assembly, part of a SCF (SKP1-cullin-F-box) protein ligase complex. Interacts with SKP1 and CUL1.

Substrate-recognition component of the SCF (SKP1-CUL1-F-box protein)-type E3 ubiquitin ligase complex. Able to recognize and bind denatured glycoproteins, which are modified with complex-type oligosaccharides. Also recognizes sulfated glycans. Does not bind high-mannose glycoproteins. This is F-box only protein 17 (Fbxo17) from Rattus norvegicus (Rat).